The following is a 94-amino-acid chain: Small ribosomal subunit protein bS18 (94 aa).

Belongs to the bacterial ribosomal protein bS18 family. In terms of assembly, part of the 30S ribosomal subunit. Forms a tight heterodimer with protein bS6.

Functionally, binds as a heterodimer with protein bS6 to the central domain of the 16S rRNA, where it helps stabilize the platform of the 30S subunit. This is Small ribosomal subunit protein bS18 from Polaromonas naphthalenivorans (strain CJ2).